The sequence spans 181 residues: ATP-dependent protease subunit HslV (181 aa).

The active site involves T8. Na(+)-binding residues include G165, C168, and T171.

It belongs to the peptidase T1B family. HslV subfamily. As to quaternary structure, a double ring-shaped homohexamer of HslV is capped on each side by a ring-shaped HslU homohexamer. The assembly of the HslU/HslV complex is dependent on binding of ATP.

Its subcellular location is the cytoplasm. It carries out the reaction ATP-dependent cleavage of peptide bonds with broad specificity.. Allosterically activated by HslU binding. In terms of biological role, protease subunit of a proteasome-like degradation complex believed to be a general protein degrading machinery. This chain is ATP-dependent protease subunit HslV, found in Oceanobacillus iheyensis (strain DSM 14371 / CIP 107618 / JCM 11309 / KCTC 3954 / HTE831).